Consider the following 235-residue polypeptide: Dephospho-CoA kinase (235 aa).

The DPCK domain occupies 15 to 219 (NVGLTGSISC…KKERLQRKSA (205 aa)). 23-28 (SCGKST) contributes to the ATP binding site.

Belongs to the CoaE family.

Its subcellular location is the cytoplasm. The catalysed reaction is 3'-dephospho-CoA + ATP = ADP + CoA + H(+). It functions in the pathway cofactor biosynthesis; coenzyme A biosynthesis; CoA from (R)-pantothenate: step 5/5. Functionally, catalyzes the phosphorylation of the 3'-hydroxyl group of dephosphocoenzyme A to form coenzyme A. This is Dephospho-CoA kinase from Syntrophus aciditrophicus (strain SB).